The sequence spans 366 residues: Phospho-N-acetylmuramoyl-pentapeptide-transferase (366 aa).

The next 10 helical transmembrane spans lie at 3-23, 52-72, 80-100, 120-140, 161-181, 197-217, 238-258, 262-282, 287-307, and 341-361; these read QIIIAGAVGLLVSIFVTPVLI, MGGIAILIGITVAYAVTGIVG, LTASGLLVLGLTLALGGLGFA, LIGQLAISLIFGALILLFPNA, LAIGPKAVGIAIFLLFIYILI, LAAGSTAIVMGTYTVITFWQF, LAILAAAGLGACLGFLWWNAA, IFMGDTGSLALGGLVAGLSVA, LLMIIVGALFVLEAASVVIQV, and FWLIAAVAALIGASIFYGEWL.

Belongs to the glycosyltransferase 4 family. MraY subfamily. Requires Mg(2+) as cofactor.

Its subcellular location is the cell membrane. It catalyses the reaction UDP-N-acetyl-alpha-D-muramoyl-L-alanyl-gamma-D-glutamyl-meso-2,6-diaminopimeloyl-D-alanyl-D-alanine + di-trans,octa-cis-undecaprenyl phosphate = di-trans,octa-cis-undecaprenyl diphospho-N-acetyl-alpha-D-muramoyl-L-alanyl-D-glutamyl-meso-2,6-diaminopimeloyl-D-alanyl-D-alanine + UMP. Its pathway is cell wall biogenesis; peptidoglycan biosynthesis. In terms of biological role, catalyzes the initial step of the lipid cycle reactions in the biosynthesis of the cell wall peptidoglycan: transfers peptidoglycan precursor phospho-MurNAc-pentapeptide from UDP-MurNAc-pentapeptide onto the lipid carrier undecaprenyl phosphate, yielding undecaprenyl-pyrophosphoryl-MurNAc-pentapeptide, known as lipid I. This chain is Phospho-N-acetylmuramoyl-pentapeptide-transferase, found in Corynebacterium diphtheriae (strain ATCC 700971 / NCTC 13129 / Biotype gravis).